A 206-amino-acid chain; its full sequence is Large ribosomal subunit protein uL4 (206 aa).

This sequence belongs to the universal ribosomal protein uL4 family. Part of the 50S ribosomal subunit.

In terms of biological role, one of the primary rRNA binding proteins, this protein initially binds near the 5'-end of the 23S rRNA. It is important during the early stages of 50S assembly. It makes multiple contacts with different domains of the 23S rRNA in the assembled 50S subunit and ribosome. Its function is as follows. Forms part of the polypeptide exit tunnel. The sequence is that of Large ribosomal subunit protein uL4 from Methylorubrum populi (strain ATCC BAA-705 / NCIMB 13946 / BJ001) (Methylobacterium populi).